The primary structure comprises 336 residues: Aromatic prenyltransferase (336 aa).

Belongs to the aromatic prenyltransferase family.

Its function is as follows. Prenyltransferase that attaches isoprenoid moieties to carbon atoms of aromatic substrates in an enzyme-catalyzed Friedel-Crafts reaction. Shows specificity for dimethylallyl diphosphate (DMAPP) and does not accept geranyl diphosphate (GPP) or isopentenyl diphosphate (IPP). Prenylates the artificial substrate 2,7-dihydroxynaphthalene (2,7-DHN), as well as dihydrophenazine-1-carboxylic acid at a lower level. Only traces of products are detected with aspulvinone E, flaviolin, or 4-hydroxybenzoic acid as substrates; and no product is formed with L-tryptophan, L-tyrosine, or 4-hydroxyphenylpyruvate. Ptf seems no to be involved in the prenylation reaction in the biosynthesis of aspulvinone H and J and the physiological function of ptf remains unknown. This Aspergillus terreus (strain NIH 2624 / FGSC A1156) protein is Aromatic prenyltransferase.